The following is a 130-amino-acid chain: Ribonuclease VapC4 (130 aa).

Residues 7-130 (LADTSVFIGI…AMPDVEVITI (124 aa)) enclose the PINc domain. The Mg(2+) site is built by aspartate 9 and aspartate 98.

The protein belongs to the PINc/VapC protein family. In terms of assembly, interacts with cognate antitoxin VapB4. It depends on Mg(2+) as a cofactor.

It localises to the secreted. In terms of biological role, toxic component of a type II toxin-antitoxin (TA) system. Probably exerts its toxic effect by binding to mRNA, inhibiting translation. Binds to, recognizes and cleaves ssRNA at ACGC and AC(A/U)GC sequences, usually between the G and C; cleavage is not very efficient, nor is cleavage required to inhibit protein synthesis. Upon expression in situ, in M.smegmatis or E.coli inhibits cell growth and colony formation; in at least E.coli also causes increased levels of cellular RNA. Its toxic effect is neutralized by coexpression with cognate antitoxin VapB4. The polypeptide is Ribonuclease VapC4 (Mycobacterium tuberculosis (strain ATCC 25618 / H37Rv)).